The primary structure comprises 326 residues: Protoheme IX farnesyltransferase (326 aa).

8 helical membrane passes run L35–L55, L60–L80, T106–V126, L129–L149, I157–G177, W185–L205, V238–M258, and W289–A309.

The protein belongs to the UbiA prenyltransferase family. Protoheme IX farnesyltransferase subfamily.

It localises to the cell inner membrane. The catalysed reaction is heme b + (2E,6E)-farnesyl diphosphate + H2O = Fe(II)-heme o + diphosphate. It functions in the pathway porphyrin-containing compound metabolism; heme O biosynthesis; heme O from protoheme: step 1/1. In terms of biological role, converts heme B (protoheme IX) to heme O by substitution of the vinyl group on carbon 2 of heme B porphyrin ring with a hydroxyethyl farnesyl side group. The protein is Protoheme IX farnesyltransferase of Synechococcus sp. (strain CC9902).